The chain runs to 136 residues: Small ribosomal subunit protein uS8c (136 aa).

The protein belongs to the universal ribosomal protein uS8 family. As to quaternary structure, part of the 30S ribosomal subunit.

Its subcellular location is the plastid. Its function is as follows. One of the primary rRNA binding proteins, it binds directly to 16S rRNA central domain where it helps coordinate assembly of the platform of the 30S subunit. In Helicosporidium sp. subsp. Simulium jonesii (Green alga), this protein is Small ribosomal subunit protein uS8c (rps8).